A 485-amino-acid polypeptide reads, in one-letter code: Putative E3 ubiquitin-protein ligase makorin-4 (485 aa).

The segment covering 1–32 (MAEAAAPGTTVTTSGAGAAAAEAAETAEAVSP) has biased composition (low complexity). Residues 1-63 (MAEAAAPGTT…GSDGSGGRGD (63 aa)) are disordered. The segment covering 45-63 (AGGGVGGSDGSDGSGGRGD) has biased composition (gly residues). 3 consecutive C3H1-type zinc fingers follow at residues 90–117 (WTKQ…HDLS), 124–146 (VCKY…HSKP), and 243–270 (ETKK…HGDL). The segment at 271–298 (CDMCGLQVLHPMDAAQRSQHIQACIEAH) is makorin-type Cys-His. The RING-type zinc finger occupies 316–370 (CGICMEVVYEKANPNEHRFGILSNCNHTFCLKCIRKWRSAKEFESRIVKSCPQCR). The C3H1-type 4 zinc-finger motif lies at 399 to 428 (AMSNKACKYFDEGRGSCPFGENCFYKHMYP).

It catalyses the reaction S-ubiquitinyl-[E2 ubiquitin-conjugating enzyme]-L-cysteine + [acceptor protein]-L-lysine = [E2 ubiquitin-conjugating enzyme]-L-cysteine + N(6)-ubiquitinyl-[acceptor protein]-L-lysine.. It participates in protein modification; protein ubiquitination. May act as a E3 ubiquitin ligase catalyzing the covalent attachment of ubiquitin moieties onto substrate proteins. This Homo sapiens (Human) protein is Putative E3 ubiquitin-protein ligase makorin-4 (MKRN4P).